A 538-amino-acid chain; its full sequence is Carboxypeptidase 2 (538 aa).

The first 21 residues, M1 to A21, serve as a signal peptide directing secretion. N-linked (GlcNAc...) asparagine glycosylation is present at N46. The interval P53 to E76 is disordered. Residues G71–A351 form the Peptidase M14 domain. H136, E139, and H224 together coordinate Zn(2+). The active-site Proton donor/acceptor is the E322. N-linked (GlcNAc...) asparagine glycosylation is found at N393 and N459.

It belongs to the peptidase M14 family. The cofactor is Zn(2+).

The protein localises to the secreted. Functionally, extracellular metalloprotease that contributes to pathogenicity. The protein is Carboxypeptidase 2 (MCPB) of Trichophyton equinum (Horse ringworm fungus).